A 491-amino-acid polypeptide reads, in one-letter code: UDP-N-acetylmuramate--L-alanine ligase (491 aa).

126 to 132 contacts ATP; sequence GTHGKTT.

This sequence belongs to the MurCDEF family.

The protein resides in the cytoplasm. The enzyme catalyses UDP-N-acetyl-alpha-D-muramate + L-alanine + ATP = UDP-N-acetyl-alpha-D-muramoyl-L-alanine + ADP + phosphate + H(+). It functions in the pathway cell wall biogenesis; peptidoglycan biosynthesis. Its function is as follows. Cell wall formation. This is UDP-N-acetylmuramate--L-alanine ligase from Klebsiella pneumoniae (strain 342).